A 608-amino-acid polypeptide reads, in one-letter code: uncharacterized protein (608 aa).

A helical transmembrane segment spans residues 4–24 (LIFMALLMSLLFIGTVFGYGD).

To M.jannaschii MJ1394 and A.fulgidus AF2028.

It localises to the membrane. This is an uncharacterized protein from Methanocaldococcus jannaschii (strain ATCC 43067 / DSM 2661 / JAL-1 / JCM 10045 / NBRC 100440) (Methanococcus jannaschii).